The primary structure comprises 302 residues: MALVASVRVPARVLLRAGARLPGAALGRTERAAGGGDGARRFGSQRVLVEPDAGAGVAVMKFKNPPVNSLSLEFLTELVISLEKLENDKSFRGVILTSDRPGVFSAGLDLTEMCGRSPAHYAGYWKAVQELWLRLYQSNLVLVSAINGACPAGGCLVALTCDYRILADNPRYCIGLNETQLGIIAPFWLKDTLENTIGHRAAERALQLGLLFPPAEALQVGIVDQVVPEEQVQSTALSAIAQWMAIPDHARQLTKAMMRKATASRLVTQRDADVQNFVSFISKDSIQKSLQMYLERLKEEKG.

Residues 1-41 (MALVASVRVPARVLLRAGARLPGAALGRTERAAGGGDGARR) constitute a mitochondrion transit peptide. Lys-61 carries the N6-acetyllysine; alternate modification. Lys-61 is subject to N6-succinyllysine; alternate. Lys-84 bears the N6-succinyllysine mark. Lys-89 bears the N6-acetyllysine mark. Substrate-binding positions include 106–110 (AGLDL), Gly-153, and Asn-177. At Lys-283 the chain carries N6-acetyllysine; alternate. The residue at position 283 (Lys-283) is an N6-succinyllysine; alternate. Lys-288 carries the N6-succinyllysine modification.

Belongs to the enoyl-CoA hydratase/isomerase family. In terms of assembly, homotrimer. As to expression, expressed in liver (at protein level).

The protein localises to the mitochondrion matrix. It carries out the reaction a (3Z)-enoyl-CoA = a 4-saturated (2E)-enoyl-CoA. The enzyme catalyses a (3E)-enoyl-CoA = a 4-saturated (2E)-enoyl-CoA. It catalyses the reaction (3Z)-octenoyl-CoA = (2E)-octenoyl-CoA. The catalysed reaction is (2E)-tetradecenoyl-CoA = (3Z)-tetradecenoyl-CoA. It carries out the reaction (3Z)-dodecenoyl-CoA = (2E)-dodecenoyl-CoA. The enzyme catalyses (3Z)-hexenoyl-CoA = (2E)-hexenoyl-CoA. It catalyses the reaction (3Z)-decenoyl-CoA = (2E)-decenoyl-CoA. The protein operates within lipid metabolism; fatty acid beta-oxidation. Key enzyme of fatty acid beta-oxidation. Able to isomerize both 3-cis (3Z) and 3-trans (3E) double bonds into the 2-trans (2E) form in a range of enoyl-CoA species, with a preference for (3Z)-enoyl-CoAs over (3E)-enoyl-CoAs. The catalytic efficiency of this enzyme is not affected by the fatty acyl chain length. In Homo sapiens (Human), this protein is Enoyl-CoA delta isomerase 1, mitochondrial (ECI1).